Reading from the N-terminus, the 222-residue chain is Charged multivesicular body protein 4b (222 aa).

Disordered regions lie at residues Met-1 to Gln-21 and Asn-177 to Ala-222. A coiled-coil region spans residues Gln-21–Gln-182.

This sequence belongs to the SNF7 family. Probable core component of the endosomal sorting required for transport complex III (ESCRT-III). ESCRT-III components are thought to multimerize to form a flat lattice on the perimeter membrane of the endosome.

It is found in the cytoplasm. The protein localises to the cytosol. The protein resides in the late endosome membrane. It localises to the midbody. Probable core component of the endosomal sorting required for transport complex III (ESCRT-III) which is involved in multivesicular bodies (MVBs) formation and sorting of endosomal cargo proteins into MVBs. MVBs contain intraluminal vesicles (ILVs) that are generated by invagination and scission from the limiting membrane of the endosome and mostly are delivered to lysosomes enabling degradation of membrane proteins, such as stimulated growth factor receptors, lysosomal enzymes and lipids. The chain is Charged multivesicular body protein 4b (chmp4b) from Xenopus laevis (African clawed frog).